Reading from the N-terminus, the 108-residue chain is Nucleoid-associated protein Bmul_1447/BMULJ_01796 (108 aa).

The tract at residues 84–108 (EATSQEKMSGMTSGLPLPPGFKLPF) is disordered. Positions 85 to 95 (ATSQEKMSGMT) are enriched in polar residues. Residues 99-108 (PLPPGFKLPF) show a composition bias toward pro residues.

Belongs to the YbaB/EbfC family. In terms of assembly, homodimer.

It localises to the cytoplasm. Its subcellular location is the nucleoid. Functionally, binds to DNA and alters its conformation. May be involved in regulation of gene expression, nucleoid organization and DNA protection. In Burkholderia multivorans (strain ATCC 17616 / 249), this protein is Nucleoid-associated protein Bmul_1447/BMULJ_01796.